A 513-amino-acid chain; its full sequence is Bifunctional purine biosynthesis protein PurH (513 aa).

One can recognise an MGS-like domain in the interval methionine 1–isoleucine 145.

The protein belongs to the PurH family.

The enzyme catalyses (6R)-10-formyltetrahydrofolate + 5-amino-1-(5-phospho-beta-D-ribosyl)imidazole-4-carboxamide = 5-formamido-1-(5-phospho-D-ribosyl)imidazole-4-carboxamide + (6S)-5,6,7,8-tetrahydrofolate. It catalyses the reaction IMP + H2O = 5-formamido-1-(5-phospho-D-ribosyl)imidazole-4-carboxamide. It functions in the pathway purine metabolism; IMP biosynthesis via de novo pathway; 5-formamido-1-(5-phospho-D-ribosyl)imidazole-4-carboxamide from 5-amino-1-(5-phospho-D-ribosyl)imidazole-4-carboxamide (10-formyl THF route): step 1/1. Its pathway is purine metabolism; IMP biosynthesis via de novo pathway; IMP from 5-formamido-1-(5-phospho-D-ribosyl)imidazole-4-carboxamide: step 1/1. The chain is Bifunctional purine biosynthesis protein PurH from Caldicellulosiruptor saccharolyticus (strain ATCC 43494 / DSM 8903 / Tp8T 6331).